Consider the following 347-residue polypeptide: Olfactory receptor 2M2 (347 aa).

Topologically, residues 1 to 25 (MAWENQTFNSDFILLGIFNHSPPHT) are extracellular. Asn-5 is a glycosylation site (N-linked (GlcNAc...) asparagine). Residues 26–49 (FLFFLVLGIFLVAFMGNSVMVLLI) form a helical membrane-spanning segment. At 50 to 57 (YLDTQLHT) the chain is on the cytoplasmic side. The chain crosses the membrane as a helical span at residues 58-79 (PMYFLLSQLSLMDLMLICTTVP). The Extracellular portion of the chain corresponds to 80–100 (KMAFNYLSGSKSISMAGCVTQ). Cys-97 and Cys-189 are oxidised to a cystine. Residues 101-120 (IFFYISLSGSECFLLAVMAY) traverse the membrane as a helical segment. The Cytoplasmic segment spans residues 121–139 (DRYIAICHPLRYTNLMNPK). A helical membrane pass occupies residues 140 to 158 (ICGLMATFSWILGSTDGII). Residues 159–195 (DAVATFSFSFCGSREIAHFFCEFPSLLILSCNDTSIF) lie on the Extracellular side of the membrane. N-linked (GlcNAc...) asparagine glycosylation is present at Asn-190. Residues 196 to 219 (EEVIFICCIVMLVFPVAIIIASYA) form a helical membrane-spanning segment. At 220–236 (RVILAVIHMGSGEGRCK) the chain is on the cytoplasmic side. Residues 237–259 (AFTTCSSHLMVVGMYYGAALFMY) form a helical membrane-spanning segment. Residues 260–272 (IRPTSDHSPTQDK) are Extracellular-facing. Residues 273-292 (MVSVFYTILTPMLNPLIYSL) form a helical membrane-spanning segment. Over 293–347 (RNKEVTRAFMKILGKGKSESELPHKLYVLLFAKFFFLISIFFYDVKILALIMYIA) the chain is Cytoplasmic.

It belongs to the G-protein coupled receptor 1 family.

It is found in the cell membrane. Odorant receptor. The chain is Olfactory receptor 2M2 (OR2M2) from Homo sapiens (Human).